The primary structure comprises 1183 residues: SRC kinase signaling inhibitor 1 (1183 aa).

A disordered region spans residues 1 to 44; it reads MGNAPSQDPERSSPPMLSADDAEYPREYRTLGGGGGGGSGGRRF. Phosphoserine is present on residues Ser13 and Ser18. A compositionally biased stretch (gly residues) spans 31–41; the sequence is LGGGGGGGSGG. Residue Ser45 is modified to Phosphoserine. A Phosphothreonine modification is found at Thr52. A phosphoserine mark is found at Ser53, Ser64, Ser143, Ser165, Ser169, Ser179, and Ser225. Tyr241 bears the Phosphotyrosine mark. Positions 284 to 379 are disordered; the sequence is ASRESSPTRR…ERRDVKPDED (96 aa). The segment covering 286 to 296 has biased composition (polar residues); sequence RESSPTRRLNN. A compositionally biased stretch (low complexity) spans 297–306; that stretch reads LSPAPHLASG. 3 positions are modified to phosphoserine: Ser298, Ser307, and Ser324. A compositionally biased stretch (low complexity) spans 313-331; the sequence is PSGLPSGLQSGSPSRSRLS. Residues Arg329 and Arg336 each carry the omega-N-methylarginine modification. 3 positions are modified to phosphoserine: Ser343, Ser362, and Ser364. Basic and acidic residues predominate over residues 369–379; sequence LERRDVKPDED. Phosphotyrosine is present on Tyr396. Positions 466–643 are disordered; it reads YGFRLPPSSP…ASSTPAGQPT (178 aa). The segment covering 485–497 has biased composition (pro residues); it reads PGGPPPPHSPYSG. Residues Ser493, Ser496, and Ser500 each carry the phosphoserine modification. Position 501 is an omega-N-methylarginine (Arg501). Ser503, Ser513, Ser515, Ser517, and Ser522 each carry phosphoserine. Low complexity predominate over residues 524-541; the sequence is GGKTRSAGSASTAGAPPS. The span at 562-574 shows a compositional bias: basic and acidic residues; it reads KDTETRERMEAME. Residues Ser598 and Ser621 each carry the phosphoserine modification. A phosphothreonine mark is found at Thr624 and Thr637. Low complexity predominate over residues 634-643; sequence ASSTPAGQPT. The segment at 647-697 is interaction with SNAP25; it reads RLQMQLHLRGLQNSASDLRGQLQQLRKLQLQNQESVRALLKRTEAELSMRV. Coiled-coil stretches lie at residues 654–674 and 726–746; these read LRGLQNSASDLRGQLQQLRKL and EELITQQLNDLEKSVEKIQRD. Residues Ser844, Ser857, and Ser866 each carry the phosphoserine modification. Disordered stretches follow at residues 861 to 907 and 949 to 1032; these read EMPP…KAVS and DCAS…VTSK. Thr884 is subject to Phosphothreonine. Position 987 is a phosphoserine (Ser987). Positions 1002 to 1011 are enriched in pro residues; it reads KSPPPPPPRR. Phosphoserine occurs at positions 1043 and 1060. Disordered stretches follow at residues 1058–1081 and 1105–1183; these read AVSEVARPASTPPIMASAIKDEDD and GASR…SISF. Polar residues predominate over residues 1135-1183; that stretch reads QAQQQATKPSKEMSGSNETSSPVSEKPSASRTSIPVLTSFGARNSSISF.

It belongs to the SRCIN1 family. As to quaternary structure, interacts with the N-terminal coiled-coil region of SNAP25. Interacts with BCAR1/p130Cas and SRC through its C-terminal domain. Interacts with CSK, CTTN, SORBS3/vinexin, SYP and MAPRE3/EB3. Tyrosine-phosphorylated in response to EGF and to cell adhesion to integrin ligands. In terms of tissue distribution, expressed in some primary breast carcinomas where its presence is significantly associated with increased tumor size. Not detected in normal breast tissue.

Its subcellular location is the cytoplasm. It is found in the cytoskeleton. The protein localises to the cell projection. It localises to the axon. The protein resides in the dendrite. Its subcellular location is the presynapse. It is found in the postsynapse. The protein localises to the postsynaptic density. Acts as a negative regulator of SRC by activating CSK which inhibits SRC activity and downstream signaling, leading to impaired cell spreading and migration. Regulates dendritic spine morphology. Involved in calcium-dependent exocytosis. May play a role in neurotransmitter release or synapse maintenance. This chain is SRC kinase signaling inhibitor 1, found in Homo sapiens (Human).